Reading from the N-terminus, the 865-residue chain is Protein translocase subunit SecA (865 aa).

Residues Q93, 111-115, and D501 contribute to the ATP site; that span reads GEGKT. Positions 841, 843, 852, and 853 each coordinate Zn(2+).

This sequence belongs to the SecA family. As to quaternary structure, monomer and homodimer. Part of the essential Sec protein translocation apparatus which comprises SecA, SecYEG and auxiliary proteins SecDF-YajC and YidC. The cofactor is Zn(2+).

It is found in the cell inner membrane. The protein localises to the cytoplasm. The enzyme catalyses ATP + H2O + cellular proteinSide 1 = ADP + phosphate + cellular proteinSide 2.. Part of the Sec protein translocase complex. Interacts with the SecYEG preprotein conducting channel. Has a central role in coupling the hydrolysis of ATP to the transfer of proteins into and across the cell membrane, serving as an ATP-driven molecular motor driving the stepwise translocation of polypeptide chains across the membrane. This chain is Protein translocase subunit SecA, found in Helicobacter pylori (strain ATCC 700392 / 26695) (Campylobacter pylori).